Reading from the N-terminus, the 308-residue chain is Taste receptor type 2 member 107 (308 aa).

The Extracellular portion of the chain corresponds to Met-1–Gly-7. The chain crosses the membrane as a helical span at residues Ile-8–Ala-28. Residues Leu-29 to Lys-43 lie on the Cytoplasmic side of the membrane. A helical membrane pass occupies residues Ile-44 to Leu-64. Residues Gln-65–Tyr-87 are Extracellular-facing. Residue Asn-80 is glycosylated (N-linked (GlcNAc...) asparagine). Residues Ile-88 to Phe-108 form a helical membrane-spanning segment. Topologically, residues Leu-109–Arg-125 are cytoplasmic. A helical membrane pass occupies residues Val-126–Pro-146. Residues Gln-147–Asn-180 are Extracellular-facing. Residues Asn-161 and Asn-175 are each glycosylated (N-linked (GlcNAc...) asparagine). A helical membrane pass occupies residues Leu-181–Leu-201. The Cytoplasmic segment spans residues Trp-202–Ser-232. Residues Phe-233–Leu-253 form a helical membrane-spanning segment. The Extracellular portion of the chain corresponds to Pro-254–Leu-258. Residues Leu-259 to Ile-279 traverse the membrane as a helical segment. Topologically, residues Leu-280–Lys-308 are cytoplasmic.

The protein belongs to the G-protein coupled receptor T2R family.

The protein resides in the membrane. Its function is as follows. Putative taste receptor which may play a role in the perception of bitterness. The chain is Taste receptor type 2 member 107 from Mus musculus (Mouse).